A 213-amino-acid polypeptide reads, in one-letter code: Outer-membrane lipoprotein carrier protein (213 aa).

The N-terminal stretch at 1 to 18 (MKYFATICIAAYAGLAGA) is a signal peptide.

The protein belongs to the LolA family. In terms of assembly, monomer.

The protein localises to the periplasm. In terms of biological role, participates in the translocation of lipoproteins from the inner membrane to the outer membrane. Only forms a complex with a lipoprotein if the residue after the N-terminal Cys is not an aspartate (The Asp acts as a targeting signal to indicate that the lipoprotein should stay in the inner membrane). The sequence is that of Outer-membrane lipoprotein carrier protein from Albidiferax ferrireducens (strain ATCC BAA-621 / DSM 15236 / T118) (Rhodoferax ferrireducens).